The following is a 209-amino-acid chain: Uridine kinase (209 aa).

Residue 12-19 (GGSGSGKT) participates in ATP binding.

It belongs to the uridine kinase family.

It localises to the cytoplasm. The catalysed reaction is uridine + ATP = UMP + ADP + H(+). It carries out the reaction cytidine + ATP = CMP + ADP + H(+). It functions in the pathway pyrimidine metabolism; CTP biosynthesis via salvage pathway; CTP from cytidine: step 1/3. It participates in pyrimidine metabolism; UMP biosynthesis via salvage pathway; UMP from uridine: step 1/1. The chain is Uridine kinase from Streptococcus mutans serotype c (strain ATCC 700610 / UA159).